Consider the following 508-residue polypeptide: Cobyric acid synthase (508 aa).

In terms of domain architecture, GATase cobBQ-type spans 249 to 451 (EVDVAIINLP…IHGIFENSLF (203 aa)). C330 serves as the catalytic Nucleophile. The active site involves H443.

Belongs to the CobB/CobQ family. CobQ subfamily.

The protein operates within cofactor biosynthesis; adenosylcobalamin biosynthesis. Catalyzes amidations at positions B, D, E, and G on adenosylcobyrinic A,C-diamide. NH(2) groups are provided by glutamine, and one molecule of ATP is hydrogenolyzed for each amidation. In Caldanaerobacter subterraneus subsp. tengcongensis (strain DSM 15242 / JCM 11007 / NBRC 100824 / MB4) (Thermoanaerobacter tengcongensis), this protein is Cobyric acid synthase.